The sequence spans 118 residues: NADH-quinone oxidoreductase subunit A (118 aa).

3 helical membrane-spanning segments follow: residues 6 to 26 (LIIG…LLTA), 61 to 81 (FMYG…LPWA), and 87 to 107 (LGLF…IGLW).

The protein belongs to the complex I subunit 3 family. As to quaternary structure, NDH-1 is composed of 14 different subunits. Subunits NuoA, H, J, K, L, M, N constitute the membrane sector of the complex.

It localises to the cell membrane. It carries out the reaction a quinone + NADH + 5 H(+)(in) = a quinol + NAD(+) + 4 H(+)(out). Functionally, NDH-1 shuttles electrons from NADH, via FMN and iron-sulfur (Fe-S) centers, to quinones in the respiratory chain. The immediate electron acceptor for the enzyme in this species is believed to be a menaquinone. Couples the redox reaction to proton translocation (for every two electrons transferred, four hydrogen ions are translocated across the cytoplasmic membrane), and thus conserves the redox energy in a proton gradient. This is NADH-quinone oxidoreductase subunit A from Clostridium beijerinckii (strain ATCC 51743 / NCIMB 8052) (Clostridium acetobutylicum).